A 131-amino-acid chain; its full sequence is Ribosome-binding factor A (131 aa).

The protein belongs to the RbfA family. In terms of assembly, monomer. Binds 30S ribosomal subunits, but not 50S ribosomal subunits or 70S ribosomes.

It is found in the cytoplasm. One of several proteins that assist in the late maturation steps of the functional core of the 30S ribosomal subunit. Associates with free 30S ribosomal subunits (but not with 30S subunits that are part of 70S ribosomes or polysomes). Required for efficient processing of 16S rRNA. May interact with the 5'-terminal helix region of 16S rRNA. This is Ribosome-binding factor A from Gloeothece citriformis (strain PCC 7424) (Cyanothece sp. (strain PCC 7424)).